The primary structure comprises 287 residues: mRNA-capping enzyme regulatory subunit OPG124 (287 aa).

The protein belongs to the orthopoxvirus mRNA-capping enzyme regulatory subunit family. As to quaternary structure, interacts with the late transcription elongation factor VLTF-4/OPG110. Interacts with the late transcription factors VLTF-1.

Its subcellular location is the virion. In terms of biological role, acts with RNA polymerase to initiate transcription from late gene promoters. The sequence is that of mRNA-capping enzyme regulatory subunit OPG124 (OPG124) from Monkeypox virus.